A 458-amino-acid polypeptide reads, in one-letter code: V-type sodium ATPase subunit B (458 aa).

Belongs to the ATPase alpha/beta chains family.

In terms of biological role, involved in ATP-driven sodium extrusion. The polypeptide is V-type sodium ATPase subunit B (ntpB) (Enterococcus hirae (strain ATCC 9790 / DSM 20160 / JCM 8729 / LMG 6399 / NBRC 3181 / NCIMB 6459 / NCDO 1258 / NCTC 12367 / WDCM 00089 / R)).